The following is a 440-amino-acid chain: NADH-quinone oxidoreductase subunit D (440 aa).

The protein belongs to the complex I 49 kDa subunit family. As to quaternary structure, NDH-1 is composed of 14 different subunits. Subunits NuoB, C, D, E, F, and G constitute the peripheral sector of the complex.

It is found in the cell membrane. The catalysed reaction is a quinone + NADH + 5 H(+)(in) = a quinol + NAD(+) + 4 H(+)(out). Functionally, NDH-1 shuttles electrons from NADH, via FMN and iron-sulfur (Fe-S) centers, to quinones in the respiratory chain. The immediate electron acceptor for the enzyme in this species is believed to be a menaquinone. Couples the redox reaction to proton translocation (for every two electrons transferred, four hydrogen ions are translocated across the cytoplasmic membrane), and thus conserves the redox energy in a proton gradient. This is NADH-quinone oxidoreductase subunit D from Mycobacterium bovis (strain ATCC BAA-935 / AF2122/97).